A 367-amino-acid chain; its full sequence is S-adenosylmethionine decarboxylase proenzyme 3 (367 aa).

Active-site residues include glutamate 9 and glutamate 12. Serine 69 acts as the Schiff-base intermediate with substrate; via pyruvic acid in catalysis. Pyruvic acid (Ser); by autocatalysis is present on serine 69. Catalysis depends on cysteine 83, which acts as the Proton donor; for catalytic activity. Active-site proton acceptor; for processing activity residues include serine 234 and histidine 247.

Belongs to the eukaryotic AdoMetDC family. Pyruvate serves as cofactor. Post-translationally, is synthesized initially as an inactive proenzyme. Formation of the active enzyme involves a self-maturation process in which the active site pyruvoyl group is generated from an internal serine residue via an autocatalytic post-translational modification. Two non-identical subunits are generated from the proenzyme in this reaction, and the pyruvate is formed at the N-terminus of the alpha chain, which is derived from the carboxyl end of the proenzyme. The post-translation cleavage follows an unusual pathway, termed non-hydrolytic serinolysis, in which the side chain hydroxyl group of the serine supplies its oxygen atom to form the C-terminus of the beta chain, while the remainder of the serine residue undergoes an oxidative deamination to produce ammonia and the pyruvoyl group blocking the N-terminus of the alpha chain.

It carries out the reaction S-adenosyl-L-methionine + H(+) = S-adenosyl 3-(methylsulfanyl)propylamine + CO2. The protein operates within amine and polyamine biosynthesis; S-adenosylmethioninamine biosynthesis; S-adenosylmethioninamine from S-adenosyl-L-methionine: step 1/1. This Brassica juncea (Indian mustard) protein is S-adenosylmethionine decarboxylase proenzyme 3 (SAMDC3).